Reading from the N-terminus, the 770-residue chain is 1,4-alpha-glucan branching enzyme GlgB (770 aa).

The active-site Nucleophile is Asp-437. The Proton donor role is filled by Glu-488.

It belongs to the glycosyl hydrolase 13 family. GlgB subfamily. Monomer.

It carries out the reaction Transfers a segment of a (1-&gt;4)-alpha-D-glucan chain to a primary hydroxy group in a similar glucan chain.. Its pathway is glycan biosynthesis; glycogen biosynthesis. Catalyzes the formation of the alpha-1,6-glucosidic linkages in glycogen by scission of a 1,4-alpha-linked oligosaccharide from growing alpha-1,4-glucan chains and the subsequent attachment of the oligosaccharide to the alpha-1,6 position. The polypeptide is 1,4-alpha-glucan branching enzyme GlgB (Synechococcus sp. (strain JA-3-3Ab) (Cyanobacteria bacterium Yellowstone A-Prime)).